A 1022-amino-acid polypeptide reads, in one-letter code: Collagen alpha-2(VI) chain (1022 aa).

The signal sequence occupies residues 1–27; that stretch reads MSRRTAEMFQQAFLSTLLCVALVPLHA. The segment at 28 to 255 is nonhelical region; the sequence is QFDDEPVTSC…CYKMTCLEIA (228 aa). Residues 44 to 168 enclose the VWFA 1 domain; sequence PISVYFVIDT…VITDGHVTGS (125 aa). Residues Asn-141 and Asn-215 are each glycosylated (N-linked (GlcNAc...) asparagine). Positions 256 to 590 are triple-helical region; that stretch reads GPAGPKGYRG…PGPPGDPGLT (335 aa). Residues 263–587 form a disordered region; sequence YRGQKGAKGN…EGTPGPPGDP (325 aa). The segment covering 287–299 has biased composition (low complexity); it reads DPGIEGPIGYPGP. Residues 306–318 are compositionally biased toward basic and acidic residues; it reads KGEKGEIGSDGRR. Asn-327 carries an N-linked (GlcNAc...) asparagine glycan. 2 consecutive short sequence motifs (cell attachment site) follow at residues 348-350 and 366-368; these read RGD. Residues 363 to 377 show a composition bias toward basic and acidic residues; that stretch reads QGERGDEGMKGDPGR. The span at 389–399 shows a compositional bias: low complexity; the sequence is EKGSPGIPGNP. 5 consecutive short sequence motifs (cell attachment site) follow at residues 426-428, 444-446, 465-467, 489-491, and 498-500; these read RGD. The segment at 514–519 is interruption in collagenous region; the sequence is GFSYPG. The segment covering 534–543 has biased composition (gly residues); that stretch reads GPKGGRGELG. Residues 591–1022 are nonhelical region; it reads DCDVMTYVRE…FFDRFIRWIC (432 aa). 2 VWFA domains span residues 613–738 and 833–957; these read ALDI…YDPR and DIVF…ITGS. N-linked (GlcNAc...) asparagine glycosylation is found at Asn-630 and Asn-897.

This sequence belongs to the type VI collagen family. As to quaternary structure, trimers composed of three different chains: alpha 1(VI), alpha 2(VI), and alpha 3(VI). In terms of processing, prolines at the third position of the tripeptide repeating unit (G-X-Y) are hydroxylated in some or all of the chains.

It is found in the secreted. Its subcellular location is the extracellular space. The protein localises to the extracellular matrix. Collagen VI acts as a cell-binding protein. The chain is Collagen alpha-2(VI) chain (COL6A2) from Gallus gallus (Chicken).